The primary structure comprises 254 residues: Imidazole glycerol phosphate synthase subunit HisF (254 aa).

Active-site residues include Asp11 and Asp130.

It belongs to the HisA/HisF family. Heterodimer of HisH and HisF.

It is found in the cytoplasm. The catalysed reaction is 5-[(5-phospho-1-deoxy-D-ribulos-1-ylimino)methylamino]-1-(5-phospho-beta-D-ribosyl)imidazole-4-carboxamide + L-glutamine = D-erythro-1-(imidazol-4-yl)glycerol 3-phosphate + 5-amino-1-(5-phospho-beta-D-ribosyl)imidazole-4-carboxamide + L-glutamate + H(+). It functions in the pathway amino-acid biosynthesis; L-histidine biosynthesis; L-histidine from 5-phospho-alpha-D-ribose 1-diphosphate: step 5/9. In terms of biological role, IGPS catalyzes the conversion of PRFAR and glutamine to IGP, AICAR and glutamate. The HisF subunit catalyzes the cyclization activity that produces IGP and AICAR from PRFAR using the ammonia provided by the HisH subunit. This chain is Imidazole glycerol phosphate synthase subunit HisF, found in Microcystis aeruginosa (strain NIES-843 / IAM M-2473).